Consider the following 215-residue polypeptide: Octanoyltransferase (215 aa).

The region spanning 31–206 is the BPL/LPL catalytic domain; it reads TDAPDEVWLV…QLVKHLDYAE (176 aa). Residues 70 to 77, 137 to 139, and 150 to 152 contribute to the substrate site; these read RGGQVTYH, SLG, and GLA. Catalysis depends on Cys-168, which acts as the Acyl-thioester intermediate.

It belongs to the LipB family.

Its subcellular location is the cytoplasm. The catalysed reaction is octanoyl-[ACP] + L-lysyl-[protein] = N(6)-octanoyl-L-lysyl-[protein] + holo-[ACP] + H(+). The protein operates within protein modification; protein lipoylation via endogenous pathway; protein N(6)-(lipoyl)lysine from octanoyl-[acyl-carrier-protein]: step 1/2. Functionally, catalyzes the transfer of endogenously produced octanoic acid from octanoyl-acyl-carrier-protein onto the lipoyl domains of lipoate-dependent enzymes. Lipoyl-ACP can also act as a substrate although octanoyl-ACP is likely to be the physiological substrate. The sequence is that of Octanoyltransferase from Pseudomonas fluorescens (strain ATCC BAA-477 / NRRL B-23932 / Pf-5).